Consider the following 673-residue polypeptide: DNA ligase (673 aa).

NAD(+)-binding positions include 34-38 (DAEYD), 83-84 (SL), and Glu116. The N6-AMP-lysine intermediate role is filled by Lys118. 4 residues coordinate NAD(+): Arg139, Glu176, Lys293, and Lys317. Positions 411, 414, 429, and 435 each coordinate Zn(2+). Residues 595 to 673 (NQQNPFFGKT…EDEFLKWVNS (79 aa)) form the BRCT domain.

It belongs to the NAD-dependent DNA ligase family. LigA subfamily. Mg(2+) is required as a cofactor. It depends on Mn(2+) as a cofactor.

The enzyme catalyses NAD(+) + (deoxyribonucleotide)n-3'-hydroxyl + 5'-phospho-(deoxyribonucleotide)m = (deoxyribonucleotide)n+m + AMP + beta-nicotinamide D-nucleotide.. Functionally, DNA ligase that catalyzes the formation of phosphodiester linkages between 5'-phosphoryl and 3'-hydroxyl groups in double-stranded DNA using NAD as a coenzyme and as the energy source for the reaction. It is essential for DNA replication and repair of damaged DNA. This is DNA ligase from Legionella pneumophila (strain Paris).